A 327-amino-acid chain; its full sequence is Ferrochelatase 2 (327 aa).

Fe cation contacts are provided by histidine 201 and glutamate 282.

Belongs to the ferrochelatase family.

It localises to the cytoplasm. It catalyses the reaction heme b + 2 H(+) = protoporphyrin IX + Fe(2+). It functions in the pathway porphyrin-containing compound metabolism; protoheme biosynthesis; protoheme from protoporphyrin-IX: step 1/1. Catalyzes the ferrous insertion into protoporphyrin IX. This Shewanella oneidensis (strain ATCC 700550 / JCM 31522 / CIP 106686 / LMG 19005 / NCIMB 14063 / MR-1) protein is Ferrochelatase 2.